The following is a 1135-amino-acid chain: Envelopment polyprotein (1135 aa).

The first 18 residues, 1 to 18, serve as a signal peptide directing secretion; sequence MIMWGLLLTMILIDFGAS. The Lumenal segment spans residues 19–495; that stretch reads LRNVYDMKIE…ALLTTFCFGW (477 aa). Intrachain disulfides connect Cys29–Cys151, Cys63–Cys157, Cys109–Cys128, Cys133–Cys138, Cys175–Cys185, Cys210–Cys247, Cys234–Cys351, Cys376–Cys435, Cys380–Cys389, Cys405–Cys424, and Cys452–Cys475. Asn134 carries an N-linked (GlcNAc...) asparagine; by host glycan. Asn235 and Asn347 each carry an N-linked (GlcNAc...) asparagine; by host glycan. Asn399 carries N-linked (GlcNAc...) asparagine; by host glycosylation. The chain crosses the membrane as a helical span at residues 496-516; it reads ILILSITLAVLVVLKFFAAIL. Residues 516 to 533 are binding to the ribonucleoprotein; it reads LHNSSQENRFKIILRKIK. Topologically, residues 517–627 are cytoplasmic; the sequence is HNSSQENRFK…LNLFRYKSRC (111 aa). CCHC-type zinc fingers lie at residues 545–565 and 570–591; these read CEVC…NLSC and CPYC…YKVC. Binding to the ribonucleoprotein stretches follow at residues 588 to 605, 592 to 603, and 611 to 625; these read YKVC…KKTI, QATHRFRDDLKK, and SPGC…RYKS. The ITAM domain maps to 611–634; that stretch reads SPGCYRTLNLFRYKSRCYIFTVWV. Phosphotyrosine occurs at positions 615 and 628. A YxxL motif is present at residues 615 to 618; that stretch reads YRTL. The helical transmembrane segment at 628–648 threads the bilayer; the sequence is YIFTVWVTLLIIESIMWAASA. The Lumenal segment spans residues 649–1105; sequence SETVLEPSWN…EWITGIFNGN (457 aa). 8 cysteine pairs are disulfide-bonded: Cys735–Cys770, Cys739–Cys777, Cys751–Cys885, Cys765–Cys896, Cys780–Cys904, Cys806–Cys815, Cys823–Cys832, and Cys863–Cys867. A fusion loop region spans residues 757 to 777; it reads FEYENNWGCNPADCPGIGTGC. Asn928 carries N-linked (GlcNAc...) asparagine; by host glycosylation. Intrachain disulfides connect Cys970-Cys1000, Cys993-Cys1045, Cys1010-Cys1015, Cys1046-Cys1051, and Cys1085-Cys1089. A helical transmembrane segment spans residues 1106 to 1126; sequence WIVIVVLVFFFILSLILLSLL. The binding to the ribonucleoprotein stretch occupies residues 1122-1135; sequence LLSLLCPIRKHKRS. The Cytoplasmic segment spans residues 1127 to 1135; it reads CPIRKHKRS.

Belongs to the hantavirus envelope glycoprotein family. In terms of assembly, homodimer. Homotetramer; forms heterotetrameric Gn-Gc spikes in the pre-fusion conformation. Interacts (via C-terminus) with the nucleoprotein. Interacts with host TUFM; this interaction contributes to the virus-induced degradation of mitochondria by autophagy, which leads to degradation of host MAVS and inhibition of type I interferon (IFN) responses. Interacts with host MAP1LC3B; this interaction contributes to the virus-induced degradation of mitochondria by autophagy, which leads to degradation of host MAVS and inhibition of type I interferon (IFN) responses. Homodimer. Homotetramer; forms heterotetrameric Gn-Gc spikes in the pre-fusion conformation. Homotrimer; forms homotrimer in the post-fusion conformation at acidic pH. Interacts (via C-terminus) with the nucleoprotein. Post-translationally, envelope polyprotein precursor is quickly cleaved in vivo just after synthesis, presumably by host signal peptidase.

It is found in the virion membrane. Its subcellular location is the host cell surface. The protein localises to the host Golgi apparatus membrane. It localises to the host endoplasmic reticulum membrane. The protein resides in the host mitochondrion. Functionally, forms homotetramers with glycoprotein C at the surface of the virion. Attaches the virion to host cell receptors including integrin ITGAV/ITGB3. This attachment induces virion internalization predominantly through clathrin-dependent endocytosis. Mediates the assembly and budding of infectious virus particles through its interaction with the nucleocapsid protein and the viral genome. May dysregulate normal immune and endothelial cell responses through an ITAM motif. Translocates to mitochondria, binds to host TUFM and recruits MAP1LC3B. These interactions induce mitochondrial autophagy and therefore destruction of host MAVS leading to inhibition of type I interferon (IFN) responses. Concomitant breakdown of glycoprotein N is apparently prevented by the nucleoprotein that may inhibit Gn-stimulated autophagosome-lysosome fusion. Interacts with the viral genomic RNA. Its function is as follows. Forms homotetramers with glycoprotein N at the surface of the virion. Attaches the virion to host cell receptors including integrin ITGAV/ITGB3. This attachment induces virion internalization predominantly through clathrin-dependent endocytosis. Class II fusion protein that promotes fusion of viral membrane with host endosomal membrane after endocytosis of the virion. The sequence is that of Envelopment polyprotein (GP) from Dobrava-Belgrade orthohantavirus (DOBV).